Reading from the N-terminus, the 802-residue chain is Post-transcriptional regulator mkt1 (802 aa).

Residues Ser227, Ser228, and Ser230 each carry the phosphoserine modification.

Belongs to the XPG/RAD2 endonuclease family. Interacts with pab1 binding protein ath1.

Its function is as follows. Involved in post-transcriptional regulation of gene expression by 3'-UTR-mediated RNA regulation. Promotes interactions between mRNA and poly(A)-binding protein. Binds the 3' UTR of mRNAs, centromeric transcripts and antisense-rDNA. Required for the establishment but not the maintenance of heterochromatin at pericentromeres, and for the maintenance of small domains of facultative heterochromatin known as HOODs. In Schizosaccharomyces pombe (strain 972 / ATCC 24843) (Fission yeast), this protein is Post-transcriptional regulator mkt1.